We begin with the raw amino-acid sequence, 253 residues long: MPKLQLSELLSLTKVEQTLRLAEVNVELEKLTAQERVVWALENLEGNPALSSSFGIQAAVMLQLVTEIKSDTPIILTDTGYLFPETYQFIDQLTDRLNLNLHVFTADESPNWQEARYGKLWEQGVEGIEKYNKLNKVQPMRRALDQLEVGIWFSGLRREQSGSRANLPILSIQNGVFKFLPVLDWTNKEVHYFLKEYDLPYHPLWDQGYLSVGDTHTTQKWEPGMSEEETRFFGLKRECGLHEDDGELGGSGI.

C239 serves as the catalytic Nucleophile; cysteine thiosulfonate intermediate.

This sequence belongs to the PAPS reductase family. CysH subfamily.

Its subcellular location is the cytoplasm. It catalyses the reaction [thioredoxin]-disulfide + sulfite + adenosine 3',5'-bisphosphate + 2 H(+) = [thioredoxin]-dithiol + 3'-phosphoadenylyl sulfate. The protein operates within sulfur metabolism; hydrogen sulfide biosynthesis; sulfite from sulfate: step 3/3. Its function is as follows. Catalyzes the formation of sulfite from phosphoadenosine 5'-phosphosulfate (PAPS) using thioredoxin as an electron donor. In Aliivibrio fischeri (strain MJ11) (Vibrio fischeri), this protein is Phosphoadenosine 5'-phosphosulfate reductase.